Reading from the N-terminus, the 659-residue chain is UvrABC system protein B (659 aa).

Residues 27–414 (EGLEQNKKSQ…AHGEIVKQII (388 aa)) enclose the Helicase ATP-binding domain. 40-47 (GVTGSGKT) is an ATP binding site. Positions 93–116 (YFDYYRPEAYMPNTDTYIDKTTKS) match the Beta-hairpin motif. Residues 432–594 (QVEDMFDEIQ…IIPKTIIKPI (163 aa)) form the Helicase C-terminal domain. The UVR domain occupies 624–659 (EALVKDLRNQMLDASKQLNFERAAELRDIILELEAN).

Belongs to the UvrB family. In terms of assembly, forms a heterotetramer with UvrA during the search for lesions. Interacts with UvrC in an incision complex.

The protein resides in the cytoplasm. The UvrABC repair system catalyzes the recognition and processing of DNA lesions. A damage recognition complex composed of 2 UvrA and 2 UvrB subunits scans DNA for abnormalities. Upon binding of the UvrA(2)B(2) complex to a putative damaged site, the DNA wraps around one UvrB monomer. DNA wrap is dependent on ATP binding by UvrB and probably causes local melting of the DNA helix, facilitating insertion of UvrB beta-hairpin between the DNA strands. Then UvrB probes one DNA strand for the presence of a lesion. If a lesion is found the UvrA subunits dissociate and the UvrB-DNA preincision complex is formed. This complex is subsequently bound by UvrC and the second UvrB is released. If no lesion is found, the DNA wraps around the other UvrB subunit that will check the other stand for damage. The polypeptide is UvrABC system protein B (Mycoplasma mobile (strain ATCC 43663 / 163K / NCTC 11711) (Mesomycoplasma mobile)).